A 312-amino-acid chain; its full sequence is tRNA dimethylallyltransferase (312 aa).

Residue 17 to 24 (GPTASGKS) participates in ATP binding. 19–24 (TASGKS) lines the substrate pocket.

Belongs to the IPP transferase family. As to quaternary structure, monomer. Mg(2+) is required as a cofactor.

It catalyses the reaction adenosine(37) in tRNA + dimethylallyl diphosphate = N(6)-dimethylallyladenosine(37) in tRNA + diphosphate. Its function is as follows. Catalyzes the transfer of a dimethylallyl group onto the adenine at position 37 in tRNAs that read codons beginning with uridine, leading to the formation of N6-(dimethylallyl)adenosine (i(6)A). This Zymomonas mobilis subsp. mobilis (strain ATCC 31821 / ZM4 / CP4) protein is tRNA dimethylallyltransferase.